Consider the following 449-residue polypeptide: tRNA-2-methylthio-N(6)-dimethylallyladenosine synthase (449 aa).

One can recognise an MTTase N-terminal domain in the interval 7–124 (DAFYIHTFGC…LPLLIKQVQQ (118 aa)). The [4Fe-4S] cluster site is built by C16, C52, C87, C163, C167, and C170. The region spanning 149–379 (RSSSMSAFVP…IECQNRISAS (231 aa)) is the Radical SAM core domain. Residues 382 to 445 (SQAVGSVVEV…SATLLGEPLI (64 aa)) form the TRAM domain.

This sequence belongs to the methylthiotransferase family. MiaB subfamily. Monomer. It depends on [4Fe-4S] cluster as a cofactor.

The protein resides in the cytoplasm. The enzyme catalyses N(6)-dimethylallyladenosine(37) in tRNA + (sulfur carrier)-SH + AH2 + 2 S-adenosyl-L-methionine = 2-methylsulfanyl-N(6)-dimethylallyladenosine(37) in tRNA + (sulfur carrier)-H + 5'-deoxyadenosine + L-methionine + A + S-adenosyl-L-homocysteine + 2 H(+). In terms of biological role, catalyzes the methylthiolation of N6-(dimethylallyl)adenosine (i(6)A), leading to the formation of 2-methylthio-N6-(dimethylallyl)adenosine (ms(2)i(6)A) at position 37 in tRNAs that read codons beginning with uridine. The chain is tRNA-2-methylthio-N(6)-dimethylallyladenosine synthase from Chlorobium chlorochromatii (strain CaD3).